Here is a 152-residue protein sequence, read N- to C-terminus: Snaclec coagulation factor IX/factor X-binding protein subunit A (152 aa).

The first 23 residues, 1-23, serve as a signal peptide directing secretion; the sequence is MGRFIFVSFGLLVVAASLSGTGA. 3 disulfides stabilise this stretch: Cys25–Cys36, Cys53–Cys150, and Cys125–Cys142. A C-type lectin domain is found at 32–151; that stretch reads YEGHCYKAFE…CGQRIPFVCE (120 aa). Residues Ser64, Glu66, and Glu70 each coordinate Ca(2+). Ca(2+) is bound at residue Glu151.

The protein belongs to the snaclec family. Heterodimer of subunits A and B; disulfide-linked. In terms of tissue distribution, expressed by the venom gland.

The protein resides in the secreted. In terms of biological role, anticoagulant protein which binds to the gamma-carboxyglutamic acid-domain regions of factors IX (F9) and factor X (F10) in the presence of calcium with a 1 to 1 stoichiometry. The chain is Snaclec coagulation factor IX/factor X-binding protein subunit A from Trimeresurus stejnegeri (Chinese green tree viper).